The sequence spans 1010 residues: DENN domain-containing protein 1A (1010 aa).

One can recognise a uDENN domain in the interval 13–143 (FEVYIEVNRP…HGHPIPEPGT (131 aa)). The cDENN domain occupies 160-296 (ELPSIPENRN…VVSALKNRIR (137 aa)). The region spanning 298 to 375 (MSTTTGDGVA…DGRLDLLNSG (78 aa)) is the dDENN domain. The FXDXF motif signature appears at 378–382 (FSDVF). Residues 455-554 (GFSTATEEPL…EATVKEPQST (100 aa)) form a disordered region. Basic and acidic residues predominate over residues 472–482 (IEKKRGEERRP). Residues 493–502 (PRPHVPRRPK) are compositionally biased toward basic residues. Positions 509 to 524 (SRTTAGSSPDQPQQYR) are enriched in polar residues. The segment covering 538 to 548 (SPEKDSSEATV) has biased composition (basic and acidic residues). Residues 560 to 569 (SLLEDIFSNL) carry the Clathrin box motif.

It is found in the cytoplasmic vesicle. The protein resides in the clathrin-coated vesicle membrane. It localises to the presynaptic cell membrane. Its function is as follows. Guanine nucleotide exchange factor (GEF) regulating clathrin-mediated endocytosis through RAB35 activation. Promotes the exchange of GDP to GTP, converting inactive GDP-bound RAB35 into its active GTP-bound form. Regulates clathrin-mediated endocytosis of synaptic vesicles and mediates exit from early endosomes. Binds phosphatidylinositol-phosphates (PtdInsPs), with some preference for PtdIns(3)P. The protein is DENN domain-containing protein 1A (dennd1a) of Xenopus laevis (African clawed frog).